The following is a 273-amino-acid chain: Dermonecrotic toxin LapSicTox-alphaIB1b2 (273 aa).

The active site involves His5. Glu25 and Asp27 together coordinate Mg(2+). Residue His41 is the Nucleophile of the active site. 2 disulfide bridges follow: Cys45–Cys51 and Cys47–Cys190. Position 85 (Asp85) interacts with Mg(2+). A glycan (N-linked (GlcNAc...) asparagine) is linked at Asn250.

Belongs to the arthropod phospholipase D family. Class II subfamily. Requires Mg(2+) as cofactor. In terms of tissue distribution, expressed by the venom gland.

The protein resides in the secreted. The catalysed reaction is an N-(acyl)-sphingosylphosphocholine = an N-(acyl)-sphingosyl-1,3-cyclic phosphate + choline. The enzyme catalyses an N-(acyl)-sphingosylphosphoethanolamine = an N-(acyl)-sphingosyl-1,3-cyclic phosphate + ethanolamine. It carries out the reaction a 1-acyl-sn-glycero-3-phosphocholine = a 1-acyl-sn-glycero-2,3-cyclic phosphate + choline. It catalyses the reaction a 1-acyl-sn-glycero-3-phosphoethanolamine = a 1-acyl-sn-glycero-2,3-cyclic phosphate + ethanolamine. In terms of biological role, dermonecrotic toxins cleave the phosphodiester linkage between the phosphate and headgroup of certain phospholipids (sphingolipid and lysolipid substrates), forming an alcohol (often choline) and a cyclic phosphate. This toxin acts on sphingomyelin (SM). It may also act on ceramide phosphoethanolamine (CPE), lysophosphatidylcholine (LPC) and lysophosphatidylethanolamine (LPE), but not on lysophosphatidylserine (LPS), and lysophosphatidylglycerol (LPG). It acts by transphosphatidylation, releasing exclusively cyclic phosphate products as second products. Induces dermonecrosis, hemolysis, increased vascular permeability, edema, inflammatory response, and platelet aggregation. This Loxosceles apachea (Apache recluse spider) protein is Dermonecrotic toxin LapSicTox-alphaIB1b2.